The sequence spans 359 residues: Guanine nucleotide-binding protein subunit alpha-11 (359 aa).

2 S-palmitoyl cysteine lipidation sites follow: C9 and C10. Residues 38–359 form the G-alpha domain; that stretch reads RELKLLLLGT…QLNLKEYNLV (322 aa). Residues 41–54 are G1 motif; that stretch reads KLLLLGTGESGKST. GTP is bound by residues 46 to 53 and 180 to 183; these read GTGESGKS and LRVR. S53 serves as a coordination point for Mg(2+). Residues 178-186 form a G2 motif region; the sequence is DVLRVRVPT. T186 serves as a coordination point for Mg(2+). Residues 201–210 are G3 motif; it reads FRMVDVGGQR. The G4 motif stretch occupies residues 270–277; sequence ILFLNKKD. GTP contacts are provided by residues 274–277 and A331; that span reads NKKD. The G5 motif stretch occupies residues 329 to 334; it reads TCATDT.

This sequence belongs to the G-alpha family. G(q) subfamily. As to quaternary structure, g proteins are composed of 3 units; alpha, beta and gamma. The alpha chain contains the guanine nucleotide binding site. Interacts with RGS22. Interacts with NTSR1.

The protein resides in the cell membrane. Its subcellular location is the cytoplasm. The catalysed reaction is GTP + H2O = GDP + phosphate + H(+). Its function is as follows. Guanine nucleotide-binding proteins (G proteins) function as transducers downstream of G protein-coupled receptors (GPCRs) in numerous signaling cascades. The alpha chain contains the guanine nucleotide binding site and alternates between an active, GTP-bound state and an inactive, GDP-bound state. Signaling by an activated GPCR promotes GDP release and GTP binding. The alpha subunit has a low GTPase activity that converts bound GTP to GDP, thereby terminating the signal. Both GDP release and GTP hydrolysis are modulated by numerous regulatory proteins. Signaling is mediated via phospholipase C-beta-dependent inositol lipid hydrolysis for signal propagation: activates phospholipase C-beta: following GPCR activation, GNA11 activates PLC-beta (PLCB1, PLCB2, PLCB3 or PLCB4), leading to production of diacylglycerol (DAG) and inositol 1,4,5-trisphosphate (IP3). Transduces FFAR4 signaling in response to long-chain fatty acids (LCFAs). Together with GNAQ, required for heart development. In the respiratory epithelium, transmits OXGR1-dependent signals that lead to downstream intracellular Ca(2+) release and mucocilliary clearance of airborne pathogens. The chain is Guanine nucleotide-binding protein subunit alpha-11 (GNA11) from Sus scrofa (Pig).